The sequence spans 319 residues: Acetyl esterase (319 aa).

The short motif at 91–93 is the Involved in the stabilization of the negatively charged intermediate by the formation of the oxyanion hole element; the sequence is HGG. Active-site residues include serine 165, aspartate 262, and histidine 292.

The protein belongs to the 'GDXG' lipolytic enzyme family. In terms of assembly, homodimer. Interacts with MalT and MelA.

The protein localises to the cytoplasm. Its function is as follows. Displays esterase activity towards short chain fatty esters (acyl chain length of up to 8 carbons). Able to hydrolyze triacetylglycerol (triacetin) and tributyrylglycerol (tributyrin), but not trioleylglycerol (triolein) or cholesterol oleate. Negatively regulates MalT activity by antagonizing maltotriose binding. Inhibits MelA galactosidase activity. The chain is Acetyl esterase from Shigella flexneri.